Consider the following 1287-residue polypeptide: Rho GTPase-activating protein 33 (1287 aa).

Residues 1-40 (MVARSTDSLDGPGEGSVQPLPTAGGPSVKGKPGKRLSAPR) form a disordered region. Phosphoserine is present on Ser8. Residues 59 to 168 (FGHIQLLLSP…CGPVLTWMEL (110 aa)) form the PX; atypical domain. One can recognise an SH3 domain in the interval 186 to 248 (PAVAAAHVIK…PSECVELFTE (63 aa)). A Rho-GAP domain is found at 315–510 (CDLGEHLSNS…FLLTHVDVLF (196 aa)). Disordered stretches follow at residues 551 to 792 (RTQG…SPAA), 813 to 832 (AGGAPASATPTPALSPGRSL), 859 to 1030 (KLRG…VPTP), 1056 to 1075 (GPPSFQPSSPAPVWRSSLGP), 1090 to 1134 (GASE…SPDF), and 1146 to 1287 (PPDH…RSYC). The span at 558–571 (TPTEPTTPKAPASP) shows a compositional bias: low complexity. Ser570 carries the post-translational modification Phosphoserine. The span at 572 to 584 (AERRKGERGEKQR) shows a compositional bias: basic and acidic residues. Positions 622–645 (SGSRPDTVTLRSAKSEESLSSQAS) are enriched in polar residues. Ser636 carries the phosphoserine modification. A compositionally biased stretch (low complexity) spans 672–709 (AGSCESLSSSSSSESSSSESSSSSSESSAAGLGALSGS). The residue at position 727 (Ser727) is a Phosphoserine. A compositionally biased stretch (pro residues) spans 752 to 766 (PGDPAPPASPAPPAP). 2 stretches are compositionally biased toward low complexity: residues 813 to 829 (AGGAPASATPTPALSPG) and 896 to 919 (PARLMALALAERAQQVAEQQSQQE). 2 stretches are compositionally biased toward polar residues: residues 972–981 (RQQSDGSLLR) and 1019–1028 (SPCSVPSQVP). At Tyr1169 the chain carries Phosphotyrosine. The segment covering 1175–1189 (GPRGPSPASSSSSSP) has biased composition (low complexity). Omega-N-methylarginine is present on Arg1244. The segment covering 1274-1287 (SWSLHSEGQTRSYC) has biased composition (polar residues).

Belongs to the PX domain-containing GAP family. As to quaternary structure, specifically interacts with CDC42 and RHOQ/TC10 through its Rho-GAP domain. Interacts with NEK6.

May be involved in several stages of intracellular trafficking. Could play an important role in the regulation of glucose transport by insulin. May act as a downstream effector of RHOQ/TC10 in the regulation of insulin-stimulated glucose transport. This Homo sapiens (Human) protein is Rho GTPase-activating protein 33 (ARHGAP33).